Consider the following 101-residue polypeptide: UPF0060 membrane protein ACIAD1364 (101 aa).

3 consecutive transmembrane segments (helical) span residues 24 to 44 (WLWLPAIISLAVFVWLLTLHP), 50 to 70 (IYAAYGGIYIFTALMWLRFID), and 79 to 99 (IWGGTVVLLGAALIILQPQGL).

This sequence belongs to the UPF0060 family.

It is found in the cell inner membrane. In Acinetobacter baylyi (strain ATCC 33305 / BD413 / ADP1), this protein is UPF0060 membrane protein ACIAD1364.